Reading from the N-terminus, the 657-residue chain is Protein PSK SIMULATOR 1 (657 aa).

4 stretches are compositionally biased toward polar residues: residues 1–15 (MGGL…NNAP), 26–39 (HLNN…SHSG), 62–76 (ESFS…SHPQ), and 540–556 (RSPN…SHNP). 2 disordered regions span residues 1-80 (MGGL…NIED) and 534-559 (PVKS…PSMG). A lipid anchor (N-myristoyl glycine) is attached at Gly-2.

The protein localises to the nucleus. In terms of biological role, promotes seedling growth probably via the regulation of phytosulfokine (PSK) signaling; PSK are peptide phytohormones acting as growth factors. Together with PSI2 and PSI3, required during vegetative growth and reproduction. May also have a function in carbohydrate metabolism. This chain is Protein PSK SIMULATOR 1, found in Arabidopsis thaliana (Mouse-ear cress).